The sequence spans 233 residues: MKVGIIGAMEEEVTLLRDRIENRQTLARAGCEIYTGQLNGIDVALLKSGIGKVAAAMGTTLLLEHCQPDLVINTGSAGGLASSLKVGDIVVSNEVRYHDADVTAFGYEPGQMAGCPAAFVADEDLIALAENCIQQLKLNAVRGLICSGDAFINGAEPLARIRAAFPTVAAVEMEAAAIGHVCYLFNTPFVVVRAISDVADQASHLSFEEFLVVAAKQSTLMIEAMLTTLAQRG.

The active-site Proton acceptor is glutamate 12. Substrate is bound by residues glycine 78, isoleucine 152, and 173–174 (ME). The Proton donor role is filled by aspartate 197.

This sequence belongs to the PNP/UDP phosphorylase family. MtnN subfamily. In terms of assembly, homodimer.

The enzyme catalyses S-adenosyl-L-homocysteine + H2O = S-(5-deoxy-D-ribos-5-yl)-L-homocysteine + adenine. The catalysed reaction is S-methyl-5'-thioadenosine + H2O = 5-(methylsulfanyl)-D-ribose + adenine. It catalyses the reaction 5'-deoxyadenosine + H2O = 5-deoxy-D-ribose + adenine. Its pathway is amino-acid biosynthesis; L-methionine biosynthesis via salvage pathway; S-methyl-5-thio-alpha-D-ribose 1-phosphate from S-methyl-5'-thioadenosine (hydrolase route): step 1/2. Catalyzes the irreversible cleavage of the glycosidic bond in both 5'-methylthioadenosine (MTA) and S-adenosylhomocysteine (SAH/AdoHcy) to adenine and the corresponding thioribose, 5'-methylthioribose and S-ribosylhomocysteine, respectively. Also cleaves 5'-deoxyadenosine, a toxic by-product of radical S-adenosylmethionine (SAM) enzymes, into 5-deoxyribose and adenine. Thus, is required for in vivo function of the radical SAM enzymes biotin synthase and lipoic acid synthase, that are inhibited by 5'-deoxyadenosine accumulation. This is 5'-methylthioadenosine/S-adenosylhomocysteine nucleosidase from Yersinia pseudotuberculosis serotype O:1b (strain IP 31758).